Reading from the N-terminus, the 134-residue chain is MRSVLTISVGLLFGLALSSVAHANDHKILGVIAMPRNETNDLALKIPVCRIVKRIQLTADHGDIELSGASVYFKTARSASQSLNVPSSIKEGQTTGWININSDNDNKRCVSKITFSGHTVNSSDMARLKVIGDD.

Residues 1 to 23 (MRSVLTISVGLLFGLALSSVAHA) form the signal peptide.

It belongs to the UPF0412 family.

This Salmonella paratyphi A (strain ATCC 9150 / SARB42) protein is UPF0412 protein YaaI.